Reading from the N-terminus, the 424-residue chain is Phosphomethylpyrimidine synthase 2 (424 aa).

Substrate is bound by residues N65, M94, Y123, H162, 184–186 (SRG), 225–228 (DGLR), and E264. Position 268 (H268) interacts with Zn(2+). Y291 lines the substrate pocket. A Zn(2+)-binding site is contributed by H332. [4Fe-4S] cluster contacts are provided by C408, C411, and C415.

This sequence belongs to the ThiC family. [4Fe-4S] cluster is required as a cofactor.

It catalyses the reaction 5-amino-1-(5-phospho-beta-D-ribosyl)imidazole + S-adenosyl-L-methionine = 4-amino-2-methyl-5-(phosphooxymethyl)pyrimidine + CO + 5'-deoxyadenosine + formate + L-methionine + 3 H(+). Its pathway is cofactor biosynthesis; thiamine diphosphate biosynthesis. Catalyzes the synthesis of the hydroxymethylpyrimidine phosphate (HMP-P) moiety of thiamine from aminoimidazole ribotide (AIR) in a radical S-adenosyl-L-methionine (SAM)-dependent reaction. This is Phosphomethylpyrimidine synthase 2 from Methanothermobacter thermautotrophicus (strain ATCC 29096 / DSM 1053 / JCM 10044 / NBRC 100330 / Delta H) (Methanobacterium thermoautotrophicum).